The sequence spans 250 residues: Manganese transport system ATP-binding protein MntB (250 aa).

The ABC transporter domain occupies 4–236; that stretch reads VELDNVTVAY…NLQKTYGGRL (233 aa). An ATP-binding site is contributed by 36-43; the sequence is GPNGAGKS.

Belongs to the ABC transporter superfamily. As to quaternary structure, the complex is probably composed of two ATP-binding proteins (MntB), two transmembrane proteins (MntC and MntD) and a solute-binding protein (MntA).

It is found in the cell membrane. Functionally, probably part of the ABC transporter complex MntABCD involved in manganese import. Probably responsible for energy coupling to the transport system. This Bacillus subtilis (strain 168) protein is Manganese transport system ATP-binding protein MntB.